The primary structure comprises 362 residues: Endopolygalacturonase II (362 aa).

The first 21 residues, 1-21 (MHSFASLLAYGLAASATLASA), serve as a signal peptide directing secretion. A propeptide spanning residues 22-27 (SPIEAR) is cleaved from the precursor. Cys30 and Cys45 form a disulfide bridge. One copy of the PbH1 1 repeat lies at 156–186 (ADDITLTDITINNADGDTLGGHNTDAFDVGN). The Proton donor role is filled by Asp201. Residues Cys203 and Cys219 are joined by a disulfide bond. Residue His223 is part of the active site. PbH1 repeat units lie at residues 238-259 (VKNVTIEHSTVSNSENAVRIKT), 267-289 (VSEITYSNIVMSGISDYGVVIQQ), and 301-322 (TNGVTITDVKLESVTGTVDSKA). N-linked (GlcNAc...) (high mannose) asparagine glycosylation occurs at Asn240. 2 cysteine pairs are disulfide-bonded: Cys329-Cys334 and Cys353-Cys362.

Belongs to the glycosyl hydrolase 28 family.

The protein resides in the secreted. The enzyme catalyses (1,4-alpha-D-galacturonosyl)n+m + H2O = (1,4-alpha-D-galacturonosyl)n + (1,4-alpha-D-galacturonosyl)m.. Functionally, involved in maceration and soft-rotting of plant tissue. Hydrolyzes the 1,4-alpha glycosidic bonds of de-esterified pectate in the smooth region of the plant cell wall. This Aspergillus niger protein is Endopolygalacturonase II.